Consider the following 81-residue polypeptide: ATP synthase subunit c (81 aa).

The next 2 membrane-spanning stretches (helical) occupy residues 6–26 and 57–77; these read AAASVIAAALAVGLAAIGPGF and LAFMESLTIYGLVIALVLLFA.

Belongs to the ATPase C chain family. F-type ATPases have 2 components, F(1) - the catalytic core - and F(0) - the membrane proton channel. F(1) has five subunits: alpha(3), beta(3), gamma(1), delta(1), epsilon(1). F(0) has four main subunits: a(1), b(1), b'(1) and c(10-14). The alpha and beta chains form an alternating ring which encloses part of the gamma chain. F(1) is attached to F(0) by a central stalk formed by the gamma and epsilon chains, while a peripheral stalk is formed by the delta, b and b' chains.

The protein resides in the cellular thylakoid membrane. Functionally, f(1)F(0) ATP synthase produces ATP from ADP in the presence of a proton or sodium gradient. F-type ATPases consist of two structural domains, F(1) containing the extramembraneous catalytic core and F(0) containing the membrane proton channel, linked together by a central stalk and a peripheral stalk. During catalysis, ATP synthesis in the catalytic domain of F(1) is coupled via a rotary mechanism of the central stalk subunits to proton translocation. Its function is as follows. Key component of the F(0) channel; it plays a direct role in translocation across the membrane. A homomeric c-ring of between 10-14 subunits forms the central stalk rotor element with the F(1) delta and epsilon subunits. The chain is ATP synthase subunit c from Rippkaea orientalis (strain PCC 8801 / RF-1) (Cyanothece sp. (strain PCC 8801)).